Consider the following 145-residue polypeptide: UPF0179 protein Msm_0285 (145 aa).

This sequence belongs to the UPF0179 family.

This Methanobrevibacter smithii (strain ATCC 35061 / DSM 861 / OCM 144 / PS) protein is UPF0179 protein Msm_0285.